The primary structure comprises 159 residues: Ribosomal RNA large subunit methyltransferase H (159 aa).

Residues leucine 76, glycine 108, and 127–132 (FGRMTY) contribute to the S-adenosyl-L-methionine site.

This sequence belongs to the RNA methyltransferase RlmH family. In terms of assembly, homodimer.

It is found in the cytoplasm. It carries out the reaction pseudouridine(1915) in 23S rRNA + S-adenosyl-L-methionine = N(3)-methylpseudouridine(1915) in 23S rRNA + S-adenosyl-L-homocysteine + H(+). Its function is as follows. Specifically methylates the pseudouridine at position 1915 (m3Psi1915) in 23S rRNA. In Carboxydothermus hydrogenoformans (strain ATCC BAA-161 / DSM 6008 / Z-2901), this protein is Ribosomal RNA large subunit methyltransferase H.